The following is a 305-amino-acid chain: MKEALHLKIPASTANLGVGFDSIGMALNKFLYLDVTVNDEDQWSFNHIGPNVDELPNDESHYIYQIAQKVAETYEVELPNLNVEMRSEIPLARGLGSSASALVGALYIANYFGDIELSKYELLQLATDFEGHPDNVAPTIYGGLVLGYYNGDTKVTDVSYIDTPKVDIIITIPSYKLKTIDARNALPDTFSHEKAVQNSAISNTMISALIQHNYELAGKMMEQDGFHEPYRQHLIPEFQTIKGIAKQHLAYATVISGAGPTVLTLIAPERSGELVRALKREFKDCRSELVTINETGVTTKVLYQR.

An ATP-binding site is contributed by 90–100; it reads PLARGLGSSAS.

It belongs to the GHMP kinase family. Homoserine kinase subfamily.

Its subcellular location is the cytoplasm. The enzyme catalyses L-homoserine + ATP = O-phospho-L-homoserine + ADP + H(+). Its pathway is amino-acid biosynthesis; L-threonine biosynthesis; L-threonine from L-aspartate: step 4/5. In terms of biological role, catalyzes the ATP-dependent phosphorylation of L-homoserine to L-homoserine phosphate. This is Homoserine kinase from Staphylococcus saprophyticus subsp. saprophyticus (strain ATCC 15305 / DSM 20229 / NCIMB 8711 / NCTC 7292 / S-41).